The chain runs to 448 residues: Argininosuccinate synthase (448 aa).

Residues 17–25 (AFSGGLDTS) and Ala-43 contribute to the ATP site. Tyr-99 lines the L-citrulline pocket. ATP is bound by residues Gly-129 and Thr-131. L-aspartate is bound by residues Thr-131, Asn-135, and Asp-136. Asn-135 contributes to the L-citrulline binding site. Asp-136 serves as a coordination point for ATP. The L-citrulline site is built by Arg-139 and Ser-192. Asp-194 provides a ligand contact to ATP. 3 residues coordinate L-citrulline: Thr-201, Glu-203, and Glu-280.

The protein belongs to the argininosuccinate synthase family. Type 2 subfamily. In terms of assembly, homotetramer.

The protein localises to the cytoplasm. It catalyses the reaction L-citrulline + L-aspartate + ATP = 2-(N(omega)-L-arginino)succinate + AMP + diphosphate + H(+). It functions in the pathway amino-acid biosynthesis; L-arginine biosynthesis; L-arginine from L-ornithine and carbamoyl phosphate: step 2/3. The protein is Argininosuccinate synthase of Pectobacterium atrosepticum (strain SCRI 1043 / ATCC BAA-672) (Erwinia carotovora subsp. atroseptica).